Consider the following 766-residue polypeptide: Single-minded homolog 1 (766 aa).

Residues 1–53 (MKEKSKNAARTRREKENSEFYELAKLLPLPSAITSQLDKASIIRLTTSYLKMR) enclose the bHLH domain. 2 consecutive PAS domains span residues 77-147 (GREL…QPYH) and 218-288 (PPSA…LVKG). The PAC domain occupies 292-335 (TKYYRFLAKHGGWVWVQSYATIVHNSRSSRPHCIVSVNYVLTDT). The region spanning 336–766 (EYKGLQLSLD…GTSVIITNGS (431 aa)) is the Single-minded C-terminal domain. Positions 353–365 (AFSYTSSSTPTMT) are enriched in polar residues. Disordered stretches follow at residues 353–431 (AFSY…SQHD), 528–563 (WDEDSVVSSPDPGSASESGDRYRTEQYQSSPHEPSK), and 642–662 (SPRENDYDNSPTALSRISSPN). Residues 368 to 387 (RKGAKSRLSSSKSKSRTSPY) carry the Nuclear localization signal motif. Over residues 373-385 (SRLSSSKSKSRTS) the composition is skewed to low complexity. Residues 394 to 404 (HTERSESDHDS) are compositionally biased toward basic and acidic residues. A compositionally biased stretch (polar residues) spans 649 to 662 (DNSPTALSRISSPN).

Efficient DNA binding requires dimerization with another bHLH protein. Heterodimer; forms a heterodimer with ARNT, ARNT2.

It localises to the nucleus. Transcriptional factor that may have pleiotropic effects during embryogenesis and in the adult. The chain is Single-minded homolog 1 (SIM1) from Pan troglodytes (Chimpanzee).